A 432-amino-acid polypeptide reads, in one-letter code: uncharacterized protein (432 aa).

The next 12 membrane-spanning stretches (helical) occupy residues 35-55 (VARV…VIYL), 60-80 (LPPA…IATG), 112-132 (VAGM…PLWS), 144-164 (VGLL…LGAL), 185-205 (LAVA…LWAA), 209-229 (AVAW…ASLL), 242-262 (AHSI…PVLL), 274-294 (GAVI…LSAM), 313-333 (LIAP…AAGL), 359-379 (AAAV…AAAL), 384-404 (LLGW…PMPL), and 408-428 (TVIA…AALA).

This sequence to M.tuberculosis Rv3630 and M.bovis Mb3654.

It localises to the cell membrane. This is an uncharacterized protein from Mycobacterium tuberculosis (strain CDC 1551 / Oshkosh).